The chain runs to 259 residues: tRNA pseudouridine synthase A (259 aa).

Catalysis depends on Asp51, which acts as the Nucleophile. A substrate-binding site is contributed by Tyr109.

The protein belongs to the tRNA pseudouridine synthase TruA family. Homodimer.

It carries out the reaction uridine(38/39/40) in tRNA = pseudouridine(38/39/40) in tRNA. Formation of pseudouridine at positions 38, 39 and 40 in the anticodon stem and loop of transfer RNAs. In Nitrosococcus oceani (strain ATCC 19707 / BCRC 17464 / JCM 30415 / NCIMB 11848 / C-107), this protein is tRNA pseudouridine synthase A.